A 287-amino-acid chain; its full sequence is L-cysteine S-thiosulfotransferase subunit SoxA (287 aa).

An N-terminal signal peptide occupies residues 1–26; that stretch reads MKTMTGRLVAAALVCGGAFSGAAVSA. Residues 74 to 168 form the Cytochrome c domain; the sequence is DDFENSGMVF…AMVALIASVS (95 aa). Cys102, Cys105, His106, Cys140, Cys203, Cys206, and His207 together coordinate heme c. Position 244 (Arg244) interacts with substrate. Cys248 contributes to the heme c binding site. Cys248 functions as the Cysteine persulfide intermediate in the catalytic mechanism.

This sequence belongs to the SoxA family. As to quaternary structure, heterodimer of SoxA and SoxX. Heme c serves as cofactor. Cysteine persulfide at Cys-248.

It is found in the periplasm. It carries out the reaction L-cysteinyl-[SoxY protein] + thiosulfate + 2 Fe(III)-[cytochrome c] = S-sulfosulfanyl-L-cysteinyl-[SoxY protein] + 2 Fe(II)-[cytochrome c] + 2 H(+). The enzyme catalyses S-sulfanyl-L-cysteinyl-[SoxY protein] + thiosulfate + 2 Fe(III)-[cytochrome c] = S-(2-sulfodisulfanyl)-L-cysteinyl-[SoxY protein] + 2 Fe(II)-[cytochrome c] + 2 H(+). Functionally, C-type diheme cytochrome, which is part of the SoxAX cytochrome complex involved in sulfur oxidation. The SoxAX complex catalyzes the formation of a heterodisulfide bond between the conserved cysteine residue on a sulfur carrier SoxYZ complex subunit SoxY and thiosulfate or other inorganic sulfur substrates. This leads to the liberation of two electrons, which may be transferred from the SoxAX complex to another cytochrome c and which then may be used for reductive CO(2) fixation. In Rhodovulum sulfidophilum (Rhodobacter sulfidophilus), this protein is L-cysteine S-thiosulfotransferase subunit SoxA.